The sequence spans 176 residues: MKFHGTTILVVRRNGQTVMGGDGQVTFGSTVLKGNARKVRKLGEGKVLAGFAGSVADAMTLFDRFEAKLREWGGNLTKAAVELAKDWRTDRVLRRLEALLLVADKENIFIISGNGEVIQPDDDAAAIGSGGPYALAAAKALLRNTDLSAREIVEKAMMIAGEICIYTNQNIVIEEV.

T6 is a catalytic residue. Na(+) contacts are provided by G161, C164, and T167.

This sequence belongs to the peptidase T1B family. HslV subfamily. In terms of assembly, a double ring-shaped homohexamer of HslV is capped on each side by a ring-shaped HslU homohexamer. The assembly of the HslU/HslV complex is dependent on binding of ATP.

It localises to the cytoplasm. The enzyme catalyses ATP-dependent cleavage of peptide bonds with broad specificity.. With respect to regulation, allosterically activated by HslU binding. Protease subunit of a proteasome-like degradation complex believed to be a general protein degrading machinery. In Thermotoga sp. (strain RQ2), this protein is ATP-dependent protease subunit HslV.